A 431-amino-acid chain; its full sequence is Serine hydroxymethyltransferase (431 aa).

(6S)-5,6,7,8-tetrahydrofolate-binding positions include Leu127 and 131–133 (GHL). At Lys236 the chain carries N6-(pyridoxal phosphate)lysine.

This sequence belongs to the SHMT family. As to quaternary structure, homodimer. Pyridoxal 5'-phosphate serves as cofactor.

It is found in the cytoplasm. The catalysed reaction is (6R)-5,10-methylene-5,6,7,8-tetrahydrofolate + glycine + H2O = (6S)-5,6,7,8-tetrahydrofolate + L-serine. It functions in the pathway one-carbon metabolism; tetrahydrofolate interconversion. The protein operates within amino-acid biosynthesis; glycine biosynthesis; glycine from L-serine: step 1/1. In terms of biological role, catalyzes the reversible interconversion of serine and glycine with tetrahydrofolate (THF) serving as the one-carbon carrier. This reaction serves as the major source of one-carbon groups required for the biosynthesis of purines, thymidylate, methionine, and other important biomolecules. Also exhibits THF-independent aldolase activity toward beta-hydroxyamino acids, producing glycine and aldehydes, via a retro-aldol mechanism. In Granulibacter bethesdensis (strain ATCC BAA-1260 / CGDNIH1), this protein is Serine hydroxymethyltransferase.